The primary structure comprises 677 residues: Envelope glycoprotein (677 aa).

A signal peptide spans 1–33 (MGSGYQLLQLPRERFRKTSFLVWVIILFQRAIS). Over 34–651 (MPLGIVTNST…DLNLWTGWRQ (618 aa)) the chain is Extracellular. The N-linked (GlcNAc...) asparagine; by host glycan is linked to N41. Cystine bridges form between C54–C610, C109–C136, C122–C148, C512–C557, and C602–C609. Residues 55-202 (RDKLSSTSQL…HFWKATPAHE (148 aa)) form a receptor-binding region. N205, N229, N239, N258, N269, N297, N317, N318, N339, N406, N420, N435, and N463 each carry an N-linked (GlcNAc...) asparagine; by host glycan. The tract at residues 306 to 486 (NLHFQILSTH…PSQPGLTINT (181 aa)) is mucin-like region. Polar residues predominate over residues 315–326 (HTNNSSDQSPAG). Disordered stretches follow at residues 315-349 (HTNN…TDSP) and 361-484 (EEMS…GLTI). 2 stretches are compositionally biased toward polar residues: residues 363–423 (MSTQ…NETI) and 432–472 (QGSN…TSPG). The tract at residues 525–540 (GAAVGLAWIPYFGPAA) is fusion peptide. Residues 555 to 596 (LICGLRQLANETTQALQLFLRATTELRTYSLLNRKAIDFLLQ) adopt a coiled-coil conformation. N564 carries N-linked (GlcNAc...) asparagine; by host glycosylation. The stretch at 616 to 635 (WTKNITDEINQIKHDFIDNP) forms a coiled coil. N619 carries an N-linked (GlcNAc...) asparagine; by host glycan. A helical membrane pass occupies residues 652–672 (WIPAGIGIIGVIIAIIALLCI). Residues C671 and C673 are each lipidated (S-palmitoyl cysteine; by host). At 673 to 677 (CKILC) the chain is on the cytoplasmic side.

Belongs to the filoviruses glycoprotein family. Homotrimer; each monomer consists of a GP1 and a GP2 subunit linked by disulfide bonds. The resulting peplomers (GP1,2) protrude from the virus surface as spikes. Interacts with host integrin alpha-V/ITGAV. Interacts with host CLEC10A. Binds also to host CD209 and CLEC4M/DC-SIGN(R). Interacts with host FOLR1. Interacts with BST2; this interaction inhibits the antiviral effect of BST2 and this allows viral release from infected cells. Interacts with host FCN1; this interaction enhances viral entry. Interacts with host TLR4; this interaction induces cell death in T-lymphocytes or proinflammatory cytokines and SOCS1 production in monocytes. As to quaternary structure, interacts with host entry receptor NPC1. In terms of assembly, GP1 and GP2delta are part of GP1,2delta soluble complexes released by ectodomain shedding. Post-translationally, the signal peptide region modulates GP's high mannose glycosylation, thereby determining the efficiency of the interactions with DC-SIGN(R). In terms of processing, N-glycosylated. O-glycosylated in the mucin-like region. Post-translationally, palmitoylation of GP2 is not required for its function. In terms of processing, specific enzymatic cleavages in vivo yield mature proteins. The precursor is processed into GP1 and GP2 by host cell furin in the trans Golgi, and maybe by other host proteases, to yield the mature GP1 and GP2 proteins. The cleavage site corresponds to the furin optimal cleavage sequence [KR]-X-[KR]-R. This cleavage does not seem to be required for function. After the internalization of the virus into cell endosomes, GP1 C-terminus is removed by the endosomal proteases cathepsin B, cathepsin L, or both, leaving a 19-kDa N-terminal fragment which is further digested by cathepsin B. Proteolytic processing of GP1,2 by host ADAM17 can remove the transmembrane anchor of GP2 and leads to shedding of complexes consisting in GP1 and truncated GP2 (GP1,2delta).

Its subcellular location is the virion membrane. It is found in the host cell membrane. It localises to the secreted. Its function is as follows. Trimeric GP1,2 complexes form the virion surface spikes and mediate the viral entry processes, with GP1 acting as the receptor-binding subunit and GP2 as the membrane fusion subunit. At later times of infection, down-regulates the expression of various host cell surface molecules that are essential for immune surveillance and cell adhesion. Down-modulates several integrins including ITGA1, ITGA2, ITGA3, ITGA4, ITGA5, ITGA6, ITGAV and ITGB1. This decrease in cell adhesion molecules may lead to cell detachment, contributing to the disruption of blood vessel integrity and hemorrhages developed during infection (cytotoxicity). Interacts with host TLR4 and thereby stimulates the differentiation and activation of monocytes leading to bystander death of T-lymphocytes. Down-regulates as well the function of host natural killer cells. Counteracts the antiviral effect of host BST2/tetherin that restricts release of progeny virions from infected cells. However, cooperates with VP40 and host BST2 to activate canonical NF-kappa-B pathway in a manner dependent on neddylation. Functions as a decoy for anti-GP1,2 antibodies thereby contributing to viral immune evasion. Interacts and activates host macrophages and dendritic cells inducing up-regulation of cytokine transcription. This effect is mediated throught activation of host TLR4. In terms of biological role, responsible for binding to the receptor(s) on target cells. Interacts with CD209/DC-SIGN and CLEC4M/DC-SIGNR which act as cofactors for virus entry into dendritic cells (DCs) and endothelial cells. Binding to the macrophage specific lectin CLEC10A also seems to enhance virus infectivity. Interaction with FOLR1/folate receptor alpha may be a cofactor for virus entry in some cell types, although results are contradictory. Members of the Tyro3 receptor tyrosine kinase family also seem to be cell entry factors in filovirus infection. Once attached, the virions are internalized through clathrin-dependent endocytosis and/or macropinocytosis. After internalization of the virus into the endosomes of the host cell, proteolysis of GP1 by two cysteine proteases, CTSB/cathepsin B and CTSL/cathepsin L removes the glycan cap and allows GP1 binding to the host entry receptor NPC1. NPC1-binding, Ca(2+) and acidic pH induce a conformational change of GP2, which unmasks its fusion peptide and permit membranes fusion. Functionally, acts as a class I viral fusion protein. Under the current model, the protein has at least 3 conformational states: pre-fusion native state, pre-hairpin intermediate state, and post-fusion hairpin state. During viral and target cell membrane fusion, the coiled coil regions (heptad repeats) assume a trimer-of-hairpins structure, positioning the fusion peptide in close proximity to the C-terminal region of the ectodomain. The formation of this structure appears to drive apposition and subsequent fusion of viral and target cell membranes. Responsible for penetration of the virus into the cell cytoplasm by mediating the fusion of the membrane of the endocytosed virus particle with the endosomal membrane. Low pH in endosomes induces an irreversible conformational change in GP2, releasing the fusion hydrophobic peptide. This Reston ebolavirus (strain Reston-89) (REBOV) protein is Envelope glycoprotein (GP).